A 930-amino-acid polypeptide reads, in one-letter code: Translation initiation factor IF-2 (930 aa).

Positions Phe-50–Val-67 are enriched in low complexity. Disordered stretches follow at residues Phe-50–Phe-196 and Glu-260–Pro-346. Basic and acidic residues-rich tracts occupy residues Ser-68–Pro-90 and Phe-110–Arg-125. The span at Lys-129–Arg-141 shows a compositional bias: low complexity. 2 stretches are compositionally biased toward basic and acidic residues: residues Arg-157–Gln-172 and Val-262–Arg-295. Low complexity predominate over residues Asn-309–Asn-318. Positions Val-337–Pro-346 are enriched in basic and acidic residues. The region spanning Glu-432–Glu-599 is the tr-type G domain. The G1 stretch occupies residues Gly-441–Thr-448. Residue Gly-441–Thr-448 participates in GTP binding. Residues Gly-466 to His-470 form a G2 region. Residues Asp-487–Gly-490 form a G3 region. GTP is bound by residues Asp-487–His-491 and Asn-541–Asp-544. Positions Asn-541 to Asp-544 are G4. Positions Ser-577–Lys-579 are G5.

The protein belongs to the TRAFAC class translation factor GTPase superfamily. Classic translation factor GTPase family. IF-2 subfamily.

It is found in the cytoplasm. In terms of biological role, one of the essential components for the initiation of protein synthesis. Protects formylmethionyl-tRNA from spontaneous hydrolysis and promotes its binding to the 30S ribosomal subunits. Also involved in the hydrolysis of GTP during the formation of the 70S ribosomal complex. This Streptococcus pneumoniae serotype 19F (strain G54) protein is Translation initiation factor IF-2.